The chain runs to 309 residues: Taste receptor type 2 member 8 (309 aa).

At 1–7 (MFSPADN) the chain is on the extracellular side. Residues 8–28 (IFIILITGEFILGILGNGYIA) form a helical membrane-spanning segment. The Cytoplasmic portion of the chain corresponds to 29 to 50 (LVNWIDWIKKKKISTTDYILTN). The chain crosses the membrane as a helical span at residues 51–71 (LVISRICLISVIVVNGIVTVL). Topologically, residues 72–82 (YPDVYTKSKLQ) are extracellular. The chain crosses the membrane as a helical span at residues 83–103 (IAISTFWTFANYLNMWFTTCL). Residues 104–131 (NVFYFLKIANSSHPLFLWLKQKIDMVVR) are Cytoplasmic-facing. Residues 132-152 (WILLGCFAISLLVSLIIAIVL) form a helical membrane-spanning segment. Residues 153-184 (SRDYRFHAIAKHKRNITEMFHVSKMLYFEPLT) are Extracellular-facing. Residue Asn-167 is glycosylated (N-linked (GlcNAc...) asparagine). A helical membrane pass occupies residues 185-205 (LFNLLAIVPFIVSLMSFFLLV). The Cytoplasmic segment spans residues 206 to 239 (RSLQRHTKQIKLYATGGRDPSTEAHVRAIKTMTS). Residues 240-260 (FIFFFFLYYITSLLVTFSYLM) traverse the membrane as a helical segment. Residues 261 to 266 (TKYKLA) lie on the Extracellular side of the membrane. Residues 267–287 (MAFGEIVAILYPSGHSFILII) traverse the membrane as a helical segment. Topologically, residues 288–309 (LNNKLRQASVRMLTCIKITCVI) are cytoplasmic.

This sequence belongs to the G-protein coupled receptor T2R family.

The protein localises to the membrane. Functionally, receptor that may play a role in the perception of bitterness and is gustducin-linked. May play a role in sensing the chemical composition of the gastrointestinal content. The activity of this receptor may stimulate alpha gustducin, mediate PLC-beta-2 activation and lead to the gating of TRPM5. In Pongo pygmaeus (Bornean orangutan), this protein is Taste receptor type 2 member 8 (TAS2R8).